The following is a 652-amino-acid chain: Acetyl-coenzyme A synthetase (652 aa).

Residues 191-194, T311, and N335 each bind CoA; that span reads RAGR. Residues 387–389, 411–416, D500, and R515 contribute to the ATP site; these read GEP and DTWWQT. Position 523 (S523) interacts with CoA. R526 contacts ATP. Mg(2+)-binding residues include V537, H539, and I542. R584 is a CoA binding site. K609 carries the N6-acetyllysine modification.

This sequence belongs to the ATP-dependent AMP-binding enzyme family. It depends on Mg(2+) as a cofactor. Post-translationally, acetylated. Deacetylation by the SIR2-homolog deacetylase activates the enzyme.

It catalyses the reaction acetate + ATP + CoA = acetyl-CoA + AMP + diphosphate. In terms of biological role, catalyzes the conversion of acetate into acetyl-CoA (AcCoA), an essential intermediate at the junction of anabolic and catabolic pathways. Acs undergoes a two-step reaction. In the first half reaction, Acs combines acetate with ATP to form acetyl-adenylate (AcAMP) intermediate. In the second half reaction, it can then transfer the acetyl group from AcAMP to the sulfhydryl group of CoA, forming the product AcCoA. Functionally, enables the cell to use acetate during aerobic growth to generate energy via the TCA cycle, and biosynthetic compounds via the glyoxylate shunt. Acetylates CheY, the response regulator involved in flagellar movement and chemotaxis. The protein is Acetyl-coenzyme A synthetase of Yersinia pseudotuberculosis serotype I (strain IP32953).